The chain runs to 237 residues: Undecaprenyl-diphosphatase (237 aa).

Helical transmembrane passes span 38 to 58 (QTAVLHLGTLVSVVLFALDGI), 65 to 85 (WRIILNLIVSTIPAGVFGVLF), 92 to 112 (LFSSPRFLPLFFSATALILMF), 126 to 146 (MSFLDALLVGIAQLFALFPGI), 166 to 186 (ALQYSFLMSIPVVLGAGILGL), 191 to 211 (VTILAPIFAFLSGLFALYVLS), and 217 to 237 (GKIWQFSYYCLFVAILSYLAG).

Belongs to the UppP family.

Its subcellular location is the cell inner membrane. It catalyses the reaction di-trans,octa-cis-undecaprenyl diphosphate + H2O = di-trans,octa-cis-undecaprenyl phosphate + phosphate + H(+). Its function is as follows. Catalyzes the dephosphorylation of undecaprenyl diphosphate (UPP). Confers resistance to bacitracin. This chain is Undecaprenyl-diphosphatase, found in Thermotoga maritima (strain ATCC 43589 / DSM 3109 / JCM 10099 / NBRC 100826 / MSB8).